A 190-amino-acid chain; its full sequence is Vascular endothelial growth factor A (190 aa).

An N-terminal signal peptide occupies residues 1-26 (MNFLLSWVHWSLALLLYLHHAKWSQA). Cystine bridges form between Cys-51–Cys-93, Cys-82–Cys-127, and Cys-86–Cys-129. N-linked (GlcNAc...) asparagine glycosylation occurs at Asn-100.

It belongs to the PDGF/VEGF growth factor family. In terms of assembly, homodimer; disulfide-linked. Also found as heterodimer with PGF. Interacts with NRP1. Interacts with BSG. Interacts with CD82; this interaction inhibits VEGFA-mediated signaling pathway.

It is found in the secreted. In terms of biological role, growth factor active in angiogenesis, vasculogenesis and endothelial cell growth. Induces endothelial cell proliferation, promotes cell migration, inhibits apoptosis and induces permeabilization of blood vessels. Binds to the FLT1/VEGFR1 and KDR/VEGFR2 receptors, heparan sulfate and heparin. Binding to NRP1 receptor initiates a signaling pathway needed for motor neuron axon guidance and cell body migration, including for the caudal migration of facial motor neurons from rhombomere 4 to rhombomere 6 during embryonic development. Also binds the DEAR/FBXW7-AS1 receptor. This Sus scrofa (Pig) protein is Vascular endothelial growth factor A (VEGFA).